The following is a 370-amino-acid chain: Homoserine kinase (370 aa).

Residues 1–34 (MASLCFQSPSKPISYFQPKSNPSPPLFAKVSVFR) constitute a chloroplast transit peptide. An ATP-binding site is contributed by 143 to 154 (LPLGSGLGSSAA).

Belongs to the GHMP kinase family. Homoserine kinase subfamily.

It localises to the plastid. The protein resides in the chloroplast stroma. The catalysed reaction is L-homoserine + ATP = O-phospho-L-homoserine + ADP + H(+). Its pathway is amino-acid biosynthesis; L-threonine biosynthesis; L-threonine from L-aspartate: step 4/5. Catalyzes the ATP-dependent phosphorylation of L-homoserine to L-homoserine phosphate. Is specific for L-homoserine and cannot use other substrates such D-serine, L-serine, D-threonine and L-threonine, galactose or D-homoserine in vitro. Required for susceptibility to the downy mildew pathogen Hyaloperonospora parasitica. This is Homoserine kinase (HSK) from Arabidopsis thaliana (Mouse-ear cress).